The primary structure comprises 405 residues: Cysteine desulfurase IscS (405 aa).

Pyridoxal 5'-phosphate is bound by residues 75–76 (AT), Asn156, Gln184, and 204–206 (SAH). Position 207 is an N6-(pyridoxal phosphate)lysine (Lys207). Thr244 provides a ligand contact to pyridoxal 5'-phosphate. The Cysteine persulfide intermediate role is filled by Cys329. Cys329 provides a ligand contact to [2Fe-2S] cluster.

This sequence belongs to the class-V pyridoxal-phosphate-dependent aminotransferase family. NifS/IscS subfamily. In terms of assembly, homodimer. Forms a heterotetramer with IscU, interacts with other sulfur acceptors. The cofactor is pyridoxal 5'-phosphate.

It is found in the cytoplasm. The enzyme catalyses (sulfur carrier)-H + L-cysteine = (sulfur carrier)-SH + L-alanine. Its pathway is cofactor biosynthesis; iron-sulfur cluster biosynthesis. Functionally, master enzyme that delivers sulfur to a number of partners involved in Fe-S cluster assembly, tRNA modification or cofactor biosynthesis. Catalyzes the removal of elemental sulfur atoms from cysteine to produce alanine. Functions as a sulfur delivery protein for Fe-S cluster synthesis onto IscU, an Fe-S scaffold assembly protein, as well as other S acceptor proteins. The chain is Cysteine desulfurase IscS from Acinetobacter baumannii (strain SDF).